The following is a 112-amino-acid chain: Photosystem II reaction center Psb28 protein (112 aa).

It belongs to the Psb28 family. Part of the photosystem II complex.

Its subcellular location is the cellular thylakoid membrane. The sequence is that of Photosystem II reaction center Psb28 protein from Synechococcus elongatus (strain ATCC 33912 / PCC 7942 / FACHB-805) (Anacystis nidulans R2).